A 1091-amino-acid polypeptide reads, in one-letter code: Error-prone DNA polymerase (1091 aa).

Residues 1–51 (MGWSNGPPSWAEMERVLNGKPRHAGVPAFDADGDVPRSRKRGAYQPPGRER) are disordered.

This sequence belongs to the DNA polymerase type-C family. DnaE2 subfamily.

Its subcellular location is the cytoplasm. It catalyses the reaction DNA(n) + a 2'-deoxyribonucleoside 5'-triphosphate = DNA(n+1) + diphosphate. Its function is as follows. DNA polymerase involved in damage-induced mutagenesis and translesion synthesis (TLS). It is not the major replicative DNA polymerase. The chain is Error-prone DNA polymerase from Mycobacterium bovis (strain ATCC BAA-935 / AF2122/97).